Reading from the N-terminus, the 350-residue chain is Galactokinase (350 aa).

Residue 14–17 coordinates substrate; it reads EHTD. ATP contacts are provided by residues serine 46 and 96–102; that span reads GAGLSSS. Mg(2+) contacts are provided by serine 102 and glutamate 134. Aspartate 146 acts as the Proton acceptor in catalysis. Tyrosine 196 is a binding site for substrate.

The protein belongs to the GHMP kinase family. GalK subfamily.

Its subcellular location is the cytoplasm. It carries out the reaction alpha-D-galactose + ATP = alpha-D-galactose 1-phosphate + ADP + H(+). It participates in carbohydrate metabolism; galactose metabolism. Functionally, catalyzes the transfer of the gamma-phosphate of ATP to D-galactose to form alpha-D-galactose-1-phosphate (Gal-1-P). This is Galactokinase from Thermotoga maritima (strain ATCC 43589 / DSM 3109 / JCM 10099 / NBRC 100826 / MSB8).